A 2174-amino-acid chain; its full sequence is Mediator of RNA polymerase II transcription subunit 13 (2174 aa).

Ser-395 is modified (phosphoserine). A disordered region spans residues 435 to 477 (RNAGQQGQAPSLGQQQQILPKHKTNEKQEKSEKPQKRPLTPFH). Residues 438–451 (GQQGQAPSLGQQQQ) show a composition bias toward low complexity. Over residues 457 to 469 (KTNEKQEKSEKPQ) the composition is skewed to basic and acidic residues. A phosphoserine mark is found at Ser-500, Ser-504, Ser-530, and Ser-537. Over residues 709 to 730 (FPDKKDRQNSEREAGKKHKVED) the composition is skewed to basic and acidic residues. Disordered stretches follow at residues 709-735 (FPDK…TSSV), 749-769 (SPSI…PSTS), and 787-816 (FNSD…ESKT). A compositionally biased stretch (basic and acidic residues) spans 805–815 (SDDKASCKESK). Residues Ser-826 and Ser-890 each carry the phosphoserine modification. The disordered stretch occupies residues 959 to 1054 (FIKEGDGSNM…ASTPSTCRPL (96 aa)). The span at 992–1003 (PPSNSGAGILPS) shows a compositional bias: low complexity. The span at 1004–1015 (PSTPRFPTPRTP) shows a compositional bias: pro residues. Ser-1029 carries the phosphoserine modification. Over residues 1040 to 1053 (DLYSPASTPSTCRP) the composition is skewed to polar residues. 2 short sequence motifs (LXXLL motif) span residues 1188-1192 (LILLL) and 1279-1283 (LRMLL). 2 stretches are compositionally biased toward polar residues: residues 1484–1498 (SQSL…NTGN) and 1563–1606 (SMNS…SLPT). Disordered stretches follow at residues 1484-1505 (SQSL…PSAT), 1557-1617 (SFPP…ESTM), and 2015-2048 (LPAS…RLLS).

Belongs to the Mediator complex subunit 13 family. As to quaternary structure, component of the Mediator complex, which is composed of MED1, MED4, MED6, MED7, MED8, MED9, MED10, MED11, MED12, MED13, MED13L, MED14, MED15, MED16, MED17, MED18, MED19, MED20, MED21, MED22, MED23, MED24, MED25, MED26, MED27, MED29, MED30, MED31, CCNC, CDK8 and CDC2L6/CDK11. The MED12, MED13, CCNC and CDK8 subunits form a distinct module termed the CDK8 module. Mediator containing the CDK8 module is less active than Mediator lacking this module in supporting transcriptional activation. Individual preparations of the Mediator complex lacking one or more distinct subunits have been variously termed ARC, CRSP, DRIP, PC2, SMCC and TRAP. Ubiquitous.

The protein localises to the nucleus. Functionally, component of the Mediator complex, a coactivator involved in the regulated transcription of nearly all RNA polymerase II-dependent genes. Mediator functions as a bridge to convey information from gene-specific regulatory proteins to the basal RNA polymerase II transcription machinery. Mediator is recruited to promoters by direct interactions with regulatory proteins and serves as a scaffold for the assembly of a functional preinitiation complex with RNA polymerase II and the general transcription factors. The chain is Mediator of RNA polymerase II transcription subunit 13 from Homo sapiens (Human).